The following is a 445-amino-acid chain: KICSTOR subunit 2 (445 aa).

The protein belongs to the KICS2 family. As to quaternary structure, part of the KICSTOR complex composed of KPTN, ITFG2, KICS2 and SZT2. SZT2 probably serves as a link between the other three proteins in the KICSTOR complex and may mediate the direct interaction with the GATOR complex via GATOR1. The KICSTOR complex interacts directly with the GATOR1 complex and most probably indirectly with the GATOR2 complex in an amino acid-independent manner.

The protein resides in the lysosome membrane. Functionally, as part of the KICSTOR complex functions in the amino acid-sensing branch of the TORC1 signaling pathway. Recruits, in an amino acid-independent manner, the GATOR1 complex to the lysosomal membranes and allows its interaction with GATOR2 and the RAG GTPases. Functions upstream of the RAG GTPases and is required to negatively regulate mTORC1 signaling in absence of amino acids. In absence of the KICSTOR complex mTORC1 is constitutively localized to the lysosome and activated. The KICSTOR complex is also probably involved in the regulation of mTORC1 by glucose. The protein is KICSTOR subunit 2 of Homo sapiens (Human).